We begin with the raw amino-acid sequence, 288 residues long: ATP synthase gamma chain (288 aa).

This sequence belongs to the ATPase gamma chain family. In terms of assembly, F-type ATPases have 2 components, CF(1) - the catalytic core - and CF(0) - the membrane proton channel. CF(1) has five subunits: alpha(3), beta(3), gamma(1), delta(1), epsilon(1). CF(0) has three main subunits: a, b and c.

Its subcellular location is the cell membrane. Its function is as follows. Produces ATP from ADP in the presence of a proton gradient across the membrane. The gamma chain is believed to be important in regulating ATPase activity and the flow of protons through the CF(0) complex. This Bacillus pumilus (strain SAFR-032) protein is ATP synthase gamma chain.